The following is a 762-amino-acid chain: Proline-rich receptor-like protein kinase PERK10 (762 aa).

The tract at residues 1–322 is disordered; sequence MTTPAQAPRE…PTPVTDNSSS (322 aa). Topologically, residues 1–328 are extracellular; it reads MTTPAQAPRE…NSSSSGISIA (328 aa). Residues 13-23 are compositionally biased toward low complexity; sequence SLSPSLASPPL. A glycan (N-linked (GlcNAc...) asparagine) is linked at Asn37. A compositionally biased stretch (low complexity) spans 41 to 57; sequence PTREPTNGNPPETTNTP. 3 stretches are compositionally biased toward pro residues: residues 60–210, 231–246, and 254–275; these read SSPP…PSTP, PPPPGSKRPTPSPPSP, and HPSPPSPPEETLPPPKPSPDPL. Over residues 276–305 the composition is skewed to low complexity; that stretch reads PSNSSSPPTLLPPSSVVSPPSPPRKSVSGP. N-linked (GlcNAc...) asparagine glycosylation is found at Asn278 and Asn319. The helical transmembrane segment at 329–349 threads the bilayer; sequence AVVGVSIGVALVLLTLIGVVV. Residues 350–762 are Cytoplasmic-facing; that stretch reads CCLKKRKKRL…NSYISKDENL (413 aa). The segment at 370–410 is disordered; that stretch reads TPMESSSPRSDSALLKTQSSAPLVGNRSSNRTYLSQSEPGG. Positions 372–407 are enriched in polar residues; that stretch reads MESSSPRSDSALLKTQSSAPLVGNRSSNRTYLSQSE. The Protein kinase domain occupies 430-706; it reads FSDENLLGEG…SQIVRAFDSL (277 aa). Residues 436-444 and Lys458 each bind ATP; that span reads LGEGGFGRV. Asp554 serves as the catalytic Proton acceptor.

The protein belongs to the protein kinase superfamily. Ser/Thr protein kinase family. In terms of assembly, interacts with KIPK1 and KIPK2 (via its cytosolic domain). Mostly expressed in inflorescence bolts and flower buds, and, to a lower extent, in roots, seedlings, leaves and siliques.

Its subcellular location is the cell membrane. It catalyses the reaction L-seryl-[protein] + ATP = O-phospho-L-seryl-[protein] + ADP + H(+). It carries out the reaction L-threonyl-[protein] + ATP = O-phospho-L-threonyl-[protein] + ADP + H(+). Functionally, could be involved in the negative regulation of root growth. The chain is Proline-rich receptor-like protein kinase PERK10 (PERK10) from Arabidopsis thaliana (Mouse-ear cress).